A 674-amino-acid polypeptide reads, in one-letter code: Probable 3',5'-cyclic-AMP phosphodiesterase pde-4 (674 aa).

The segment at 1 to 82 is disordered; it reads MPRRRGSSSS…TSSASSYHPP (82 aa). Residues 15–24 are compositionally biased toward gly residues; sequence GGSGGGGGFG. Low complexity predominate over residues 39–62; it reads RTSSPSASSTSRTPPAALPPRTSA. A compositionally biased stretch (polar residues) spans 66–78; sequence PGSNHKLTSSASS. Positions 328 to 660 constitute a PDEase domain; sequence HVPEYGVNCA…EWYQSRIPEE (333 aa). Residue His-407 is the Proton donor of the active site. A divalent metal cation contacts are provided by His-411, His-447, Asp-448, and Asp-565.

Belongs to the cyclic nucleotide phosphodiesterase family. A divalent metal cation serves as cofactor. As to expression, expressed in dorsal D (DD) motor neurons and several other neurons at the L1 stage. Expression in DD neurons decreases gradually beginning in the late L1 stage. Highly expressed in adult ventral D (VD) motor neurons, but diminished in adult DD motor neurons.

It catalyses the reaction 3',5'-cyclic AMP + H2O = AMP + H(+). Functionally, hydrolyzes the second messenger 3',5'-cyclic AMP (cAMP), which is a key regulator of many important physiological processes. Antagonizes dorsal D (DD) motor neuron respecification by reducing levels of cAMP. The chain is Probable 3',5'-cyclic-AMP phosphodiesterase pde-4 (pde-4) from Caenorhabditis elegans.